The primary structure comprises 315 residues: Cytoplasmic dynein intermediate light chain DYN3 (315 aa).

This sequence belongs to the dynein light intermediate chain DYN3 family. In terms of assembly, the cytoplasmic dynein is composed of at least two heavy chains and a number of intermediate and light chains.

It is found in the cytoplasm. The protein resides in the cytoskeleton. Functionally, component of the cytoplasmic dynein which acts as a motor for the intracellular retrograde motility of vesicles and organelles along microtubules. May play an important role in the proper orientation of the mitotic spindle into the budding daughter cell yeast. Probably required for normal progression of the cell cycle. This chain is Cytoplasmic dynein intermediate light chain DYN3 (DYN3), found in Candida glabrata (strain ATCC 2001 / BCRC 20586 / JCM 3761 / NBRC 0622 / NRRL Y-65 / CBS 138) (Yeast).